The following is a 177-amino-acid chain: Large ribosomal subunit protein uL6 (177 aa).

Belongs to the universal ribosomal protein uL6 family. As to quaternary structure, part of the 50S ribosomal subunit.

Its function is as follows. This protein binds to the 23S rRNA, and is important in its secondary structure. It is located near the subunit interface in the base of the L7/L12 stalk, and near the tRNA binding site of the peptidyltransferase center. This chain is Large ribosomal subunit protein uL6, found in Rhizorhabdus wittichii (strain DSM 6014 / CCUG 31198 / JCM 15750 / NBRC 105917 / EY 4224 / RW1) (Sphingomonas wittichii).